The sequence spans 146 residues: Hemoglobin cathodic subunit beta (146 aa).

Residues 2 to 146 form the Globin domain; it reads QWSSSERSTI…VVSALSRQYF (145 aa). Heme b contacts are provided by His63 and His92.

The protein belongs to the globin family. Heterotetramer of two alpha chains and two beta chains. As to expression, red blood cells.

Functionally, involved in oxygen transport from the gills to the various peripheral tissues. The chain is Hemoglobin cathodic subunit beta from Conger conger (Conger eel).